Consider the following 182-residue polypeptide: Phospholipase A2 inhibitor gamma subunit A (182 aa).

8 disulfide bridges follow: Cys-3–Cys-27, Cys-6–Cys-13, Cys-20–Cys-48, Cys-54–Cys-75, Cys-76–Cys-81, Cys-99–Cys-124, Cys-117–Cys-146, and Cys-150–Cys-172. A glycan (N-linked (GlcNAc...) asparagine) is linked at Asn-157.

The protein belongs to the CNF-like-inhibitor family. Heterotrimer of 2 subunits A and 1 subunit B. Post-translationally, N-glycosylation is not important for activity, since deglycosylation does not change its PLA2 inhibitory activity. In terms of tissue distribution, expressed by the liver.

Its subcellular location is the secreted. In terms of biological role, strongly inhibits its own venom PLA2 and all other PLA2s tested including Elapid, Crotalid and Viperid venom PLA2s, as well as honeybee PLA2s. The sequence is that of Phospholipase A2 inhibitor gamma subunit A from Laticauda semifasciata (Black-banded sea krait).